The chain runs to 395 residues: Terminal nucleotidyltransferase 5B (395 aa).

The protein belongs to the TENT family.

It localises to the cytoplasm. The protein localises to the nucleus. The catalysed reaction is RNA(n) + ATP = RNA(n)-3'-adenine ribonucleotide + diphosphate. In terms of biological role, catalyzes the transfer of one adenosine molecule from an ATP to an mRNA poly(A) tail bearing a 3'-OH terminal group in an ATP hydrolysis-dependent manner and participates in cytoplasmic polyadenylation. May be involved in maintaining the translation efficiency of at least some genes through preventing degradation of their mRNAs. In Xenopus tropicalis (Western clawed frog), this protein is Terminal nucleotidyltransferase 5B.